The following is a 755-amino-acid chain: MAESSSPLPPLCERISHKSYFLRAVDLTILGLLLSLLLYRILHVNQKDTVWIVAFLCETCFTFVWLLITNIKWSPADYKTYPERLDERVHELPPVDMFVTTADPVREPPLIVVNTVLSLLAVNYPANKLACYVSDDGCSPLTYFSLKEASKFAKIWVPFCKKYNVRVRAPFMYFRNSPEAAEGSEFSKDWEMTKREYEKLSQKVEDATGSSHWLDAEDDFEAFLNTKSNDHSTIVKVVWENKGGVGDEKEVPHVVYISREKRPNHFHHYKAGAMNFLVRVSGLMTNAPYMLNVDCDMYVNEADVVRQAMCIFLQKSMDSNHCAFVQYPQDFYDSNVGELTVLQLYLGRGIAGIQGPQYAGSGCFHTRRVMYGLSLDDLGDDGSLSSIATRKYLAEESLTREFGNSKEMVKSVVDALQRKPFPQKNLKDSLETAQEMGHCHYEYQTSWGKNIGWLYDSTTEDVNTSIGIHSRGWTSSYIFPDPPAFLGCMPQGGPEVMVQQRRWATGLLEILFNKQSPLIGMFCRKIRFRQSLAYLYVFSWGLRSIPELFYCLLPAYCLLHNSALFPKGVYLGIIITLVGIHCLYTLWEFMNLGFSIQSWYVTQSFGRIKTTCSWLFSVLDVILKLLGISKTVFIVTKKTMPETKSGSGSKKSQREVDCPNQDSGKFEFDGSLYFLPGTFIVLVNLAALAGCLVGLQSRGGGGSGLAEACGCILVVILFLPFLKGMFEKGKYGIPFSTLSKAAFLAALFVVLSVGN.

2 helical membrane passes run 24–44 (AVDL…ILHV) and 49–69 (TVWI…LLIT). Active-site residues include Asp136 and Asp461. The next 6 membrane-spanning stretches (helical) occupy residues 533–556 (AYLY…LPAY), 569–589 (VYLG…LWEF), 615–635 (LFSV…VFIV), 674–694 (FLPG…CLVG), 702–722 (GSGL…LPFL), and 733–753 (IPFS…VLSV).

It belongs to the glycosyltransferase 2 family. Plant cellulose synthase-like B subfamily.

Its subcellular location is the golgi apparatus membrane. Thought to be a Golgi-localized beta-glycan synthase that polymerize the backbones of noncellulosic polysaccharides (hemicelluloses) of plant cell wall. The polypeptide is Cellulose synthase-like protein B4 (CSLB4) (Arabidopsis thaliana (Mouse-ear cress)).